The chain runs to 439 residues: Tol-Pal system protein TolB (439 aa).

An N-terminal signal peptide occupies residues 1–22 (MKKPLRWLAALTALLLPLSALA).

The protein belongs to the TolB family. As to quaternary structure, the Tol-Pal system is composed of five core proteins: the inner membrane proteins TolA, TolQ and TolR, the periplasmic protein TolB and the outer membrane protein Pal. They form a network linking the inner and outer membranes and the peptidoglycan layer.

Its subcellular location is the periplasm. In terms of biological role, part of the Tol-Pal system, which plays a role in outer membrane invagination during cell division and is important for maintaining outer membrane integrity. The protein is Tol-Pal system protein TolB of Xanthomonas axonopodis pv. citri (strain 306).